The chain runs to 270 residues: Tryptophan synthase alpha chain (270 aa).

Active-site proton acceptor residues include Glu-57 and Asp-68.

The protein belongs to the TrpA family. In terms of assembly, tetramer of two alpha and two beta chains.

The enzyme catalyses (1S,2R)-1-C-(indol-3-yl)glycerol 3-phosphate + L-serine = D-glyceraldehyde 3-phosphate + L-tryptophan + H2O. Its pathway is amino-acid biosynthesis; L-tryptophan biosynthesis; L-tryptophan from chorismate: step 5/5. Functionally, the alpha subunit is responsible for the aldol cleavage of indoleglycerol phosphate to indole and glyceraldehyde 3-phosphate. This chain is Tryptophan synthase alpha chain, found in Mycobacterium bovis (strain ATCC BAA-935 / AF2122/97).